The sequence spans 487 residues: 3-octaprenyl-4-hydroxybenzoate carboxy-lyase (487 aa).

Asparagine 172 serves as a coordination point for Mn(2+). Residues 175 to 177, 189 to 191, and 194 to 195 each bind prenylated FMN; these read IYR, RWL, and RG. Residue glutamate 238 participates in Mn(2+) binding. Catalysis depends on aspartate 287, which acts as the Proton donor.

This sequence belongs to the UbiD family. As to quaternary structure, homohexamer. It depends on prenylated FMN as a cofactor. Mn(2+) is required as a cofactor.

The protein localises to the cell membrane. The enzyme catalyses a 4-hydroxy-3-(all-trans-polyprenyl)benzoate + H(+) = a 2-(all-trans-polyprenyl)phenol + CO2. It functions in the pathway cofactor biosynthesis; ubiquinone biosynthesis. Catalyzes the decarboxylation of 3-octaprenyl-4-hydroxy benzoate to 2-octaprenylphenol, an intermediate step in ubiquinone biosynthesis. This Thiobacillus denitrificans (strain ATCC 25259 / T1) protein is 3-octaprenyl-4-hydroxybenzoate carboxy-lyase.